Consider the following 546-residue polypeptide: Chaperonin GroEL 2 (546 aa).

ATP contacts are provided by residues 30 to 33 (TLGP), Lys-51, 87 to 91 (DGTTT), Gly-415, 479 to 481 (NAA), and Asp-495. Residues 526-546 (KEDAPMPGGMPGGMGGMGMDM) are disordered. Residues 534–546 (GMPGGMGGMGMDM) are compositionally biased toward gly residues.

The protein belongs to the chaperonin (HSP60) family. In terms of assembly, forms a cylinder of 14 subunits composed of two heptameric rings stacked back-to-back. Interacts with the co-chaperonin GroES.

It is found in the cytoplasm. The catalysed reaction is ATP + H2O + a folded polypeptide = ADP + phosphate + an unfolded polypeptide.. Functionally, together with its co-chaperonin GroES, plays an essential role in assisting protein folding. The GroEL-GroES system forms a nano-cage that allows encapsulation of the non-native substrate proteins and provides a physical environment optimized to promote and accelerate protein folding. This is Chaperonin GroEL 2 from Burkholderia lata (strain ATCC 17760 / DSM 23089 / LMG 22485 / NCIMB 9086 / R18194 / 383).